Consider the following 49-residue polypeptide: Large ribosomal subunit protein bL33A (49 aa).

Belongs to the bacterial ribosomal protein bL33 family.

This Staphylococcus saprophyticus subsp. saprophyticus (strain ATCC 15305 / DSM 20229 / NCIMB 8711 / NCTC 7292 / S-41) protein is Large ribosomal subunit protein bL33A.